A 228-amino-acid chain; its full sequence is NAD(P)H-quinone oxidoreductase subunit K, chloroplastic (228 aa).

[4Fe-4S] cluster is bound by residues cysteine 43, cysteine 44, cysteine 108, and cysteine 139.

It belongs to the complex I 20 kDa subunit family. NDH is composed of at least 16 different subunits, 5 of which are encoded in the nucleus. Requires [4Fe-4S] cluster as cofactor.

It is found in the plastid. The protein localises to the chloroplast thylakoid membrane. The catalysed reaction is a plastoquinone + NADH + (n+1) H(+)(in) = a plastoquinol + NAD(+) + n H(+)(out). The enzyme catalyses a plastoquinone + NADPH + (n+1) H(+)(in) = a plastoquinol + NADP(+) + n H(+)(out). NDH shuttles electrons from NAD(P)H:plastoquinone, via FMN and iron-sulfur (Fe-S) centers, to quinones in the photosynthetic chain and possibly in a chloroplast respiratory chain. The immediate electron acceptor for the enzyme in this species is believed to be plastoquinone. Couples the redox reaction to proton translocation, and thus conserves the redox energy in a proton gradient. This chain is NAD(P)H-quinone oxidoreductase subunit K, chloroplastic, found in Ceratophyllum demersum (Rigid hornwort).